We begin with the raw amino-acid sequence, 75 residues long: MSSGGLLLLLGLLTLWAELTPVSSQDRPKKPGLCPPRPQKPPCVRECKNDWRCPGEQKCCRYGCIYECRDPIFVK.

A signal peptide spans Met1–Ser24. Residues Arg27 to Ile72 form the WAP domain. 4 disulfides stabilise this stretch: Cys34-Cys60, Cys43-Cys64, Cys47-Cys59, and Cys53-Cys68.

The protein belongs to the venom waprin family. Expressed by the venom gland.

The protein localises to the secreted. Functionally, damages membranes of susceptible bacteria. Has no hemolytic activity. Not toxic to mice. Does not inhibit the proteinases elastase and cathepsin G. The sequence is that of Carwaprin-b from Tropidechis carinatus (Australian rough-scaled snake).